Consider the following 1521-residue polypeptide: Lysophospholipase NTE1 (1521 aa).

The Cytoplasmic portion of the chain corresponds to 1 to 50 (MDVVNSTARAAVTSATAVTAVTGTGDRHPNPLSSAVAAASDVANAHGSSS). A helical membrane pass occupies residues 51–71 (WLGLFARVVLWLLQFVSMVLY). At 72-96 (YAIKLATISVPTLLYTLFSTSLTVT) the chain is on the lumenal side. A helical transmembrane segment spans residues 97 to 117 (MNATTLMLIVAAMIGAISWVV). At 118-1521 (RYRYLNMYSR…RTMAPRRASI (1404 aa)) the chain is on the cytoplasmic side. 3 disordered regions span residues 280-301 (HADE…PNYP), 315-372 (SVPN…SAHP), and 738-768 (HAMD…KVDD). Composition is skewed to polar residues over residues 316–334 (VPNT…NNLP) and 738–753 (HAMD…QRSP). A nucleoside 3',5'-cyclic phosphate-binding positions include 670-789 (PASP…GGLA) and 837-957 (RLTN…IASR). Residues 1217–1381 (LVLGGGGARG…VDNLTVSHMK (165 aa)) enclose the PNPLA domain. Positions 1221–1226 (GGGARG) match the GXGXXG motif. A GXSXG motif is present at residues 1248 to 1252 (GTSIG). The Nucleophile role is filled by Ser1250. Asp1368 functions as the Proton acceptor in the catalytic mechanism. Residues 1368-1370 (DGG) carry the DGA/G motif.

It belongs to the NTE family.

It is found in the endoplasmic reticulum membrane. The enzyme catalyses a 1-acyl-sn-glycero-3-phosphocholine + H2O = sn-glycerol 3-phosphocholine + a fatty acid + H(+). Its activity is regulated as follows. Inhibited by organophosphorus esters. In terms of biological role, intracellular phospholipase B that catalyzes the double deacylation of phosphatidylcholine (PC) to glycerophosphocholine (GroPCho). Plays an important role in membrane lipid homeostasis. Responsible for the rapid PC turnover in response to inositol, elevated temperatures, or when choline is present in the growth medium. The polypeptide is Lysophospholipase NTE1 (NTE1) (Chaetomium globosum (strain ATCC 6205 / CBS 148.51 / DSM 1962 / NBRC 6347 / NRRL 1970) (Soil fungus)).